A 314-amino-acid polypeptide reads, in one-letter code: Melanoma-associated antigen 12 (314 aa).

Positions 1–14 are enriched in basic and acidic residues; that stretch reads MPLEQRSQHCKPEE. Residues 1–72 form a disordered region; it reads MPLEQRSQHC…HSPQGASTLP (72 aa). Residues 17-44 show a composition bias toward low complexity; sequence EAQGEALGLVGAQAPATEEQETASSSST. Positions 109-308 constitute an MAGE domain; the sequence is LSRKMAELVH…ISYPPLHEWA (200 aa).

As to expression, expressed in many tumors of several types, such as melanoma, head and neck squamous cell carcinoma, lung carcinoma and breast carcinoma, but not in normal tissues except for testes.

Its function is as follows. Not known, though may play a role tumor transformation or progression. In vitro promotes cell viability in melanoma cell lines. In Homo sapiens (Human), this protein is Melanoma-associated antigen 12 (MAGEA12).